The chain runs to 147 residues: MERPLTVLQVSLYHPTQGPVAFAHVPQQLQHDASRLLVGRGQNTHLQLQLPQLSRYHLSLEPYLEKGSSLLAFCLKVLTRKSCVWVNGLPLRYLEQVPLGTINRISFSGIQMLVRKEGGASLETFVCYFHLSPSPLIYRPKAQETDE.

The FHA domain maps to 36–108 (LLVGRGQNTH…LGTINRISFS (73 aa)).

Interacts with TIFA. Expressed at high levels in spleen and at moderate levels in lung, thymus, and small intestine.

Inhibits TIFA-mediated TRAF6 activation possibly by inducing a conformational change in TIFA. This chain is TRAF-interacting protein with FHA domain-containing protein B, found in Mus musculus (Mouse).